The primary structure comprises 1073 residues: Lon protease homolog, mitochondrial (1073 aa).

The transit peptide at 1 to 27 directs the protein to the mitochondrion; it reads MIKASKCNKARALFLVRTSIPRTFIRN. Composition is skewed to basic and acidic residues over residues 69–107 and 113–123; these read FDSK…RKDI and YDIKEETDSKP. The segment at 69–173 is disordered; that stretch reads FDSKKEKQPS…DKEFLSPSDA (105 aa). Over residues 132–150 the composition is skewed to low complexity; it reads SSKSSISSSSGGANNNNNN. Residues 158–167 are compositionally biased toward basic and acidic residues; that stretch reads DDGSPKDKEF. The Lon N-terminal domain maps to 177–395; that stretch reads PPFLAIAMKD…LSLQLLQVEA (219 aa). Residue 543–550 participates in ATP binding; that stretch reads GPPGTGKT. Over residues 775-785 the composition is skewed to basic and acidic residues; it reads SVISDKAKKDA. Positions 775 to 821 are disordered; that stretch reads SVISDKAKKDAGSSSIESNDSNTEAKVSTTTENEKKQEQKQKQDEEI. Residues 790–805 are compositionally biased toward polar residues; it reads IESNDSNTEAKVSTTT. Basic and acidic residues predominate over residues 806–821; it reads ENEKKQEQKQKQDEEI. The 189-residue stretch at 856–1044 folds into the Lon proteolytic domain; the sequence is TLNPGVATGL…SEVFEHLFKG (189 aa). Active-site residues include Ser-950 and Lys-993.

Belongs to the peptidase S16 family. In terms of assembly, homohexamer or homoheptamer. Organized in a ring with a central cavity.

The protein resides in the mitochondrion matrix. It catalyses the reaction Hydrolysis of proteins in presence of ATP.. Functionally, ATP-dependent serine protease that mediates the selective degradation of misfolded, unassembled or oxidatively damaged polypeptides as well as certain short-lived regulatory proteins in the mitochondrial matrix. May also have a chaperone function in the assembly of inner membrane protein complexes. Participates in the regulation of mitochondrial gene expression and in the maintenance of the integrity of the mitochondrial genome. Binds to mitochondrial DNA in a site-specific manner. The polypeptide is Lon protease homolog, mitochondrial (Candida dubliniensis (strain CD36 / ATCC MYA-646 / CBS 7987 / NCPF 3949 / NRRL Y-17841) (Yeast)).